We begin with the raw amino-acid sequence, 199 residues long: 5'-deoxynucleotidase YfbR (199 aa).

Residues 18-19 (RW) and His-33 contribute to the substrate site. One can recognise an HD domain in the interval 30–142 (VSEHSLQVAM…VKQADALCAY (113 aa)). A divalent metal cation-binding residues include His-33, His-68, and Asp-69. Residues Asp-69, 77–80 (DLPT), and Asp-137 contribute to the substrate site. Asp-137 provides a ligand contact to a divalent metal cation.

The protein belongs to the 5DNU family. As to quaternary structure, homodimer. Requires a divalent metal cation as cofactor.

It is found in the cytoplasm. The catalysed reaction is a 2'-deoxyribonucleoside 5'-phosphate + H2O = a 2'-deoxyribonucleoside + phosphate. Functionally, catalyzes the strictly specific dephosphorylation of 2'-deoxyribonucleoside 5'-monophosphates. This is 5'-deoxynucleotidase YfbR from Salmonella arizonae (strain ATCC BAA-731 / CDC346-86 / RSK2980).